The following is a 137-amino-acid chain: Large ribosomal subunit protein uL16 (137 aa).

The protein belongs to the universal ribosomal protein uL16 family. In terms of assembly, part of the 50S ribosomal subunit.

Its function is as follows. Binds 23S rRNA and is also seen to make contacts with the A and possibly P site tRNAs. The protein is Large ribosomal subunit protein uL16 of Tolumonas auensis (strain DSM 9187 / NBRC 110442 / TA 4).